The following is a 352-amino-acid chain: Glucose-6-phosphatase catalytic subunit 1 (352 aa).

Over 1–27 (MDLLHSWGVELAVYLQTRYGKYEGLFD) the chain is Lumenal. The chain crosses the membrane as a helical span at residues 28-48 (LASTVADLHTTFFWLFPIWFH). The Cytoplasmic portion of the chain corresponds to 49-56 (LRRDTALR). The chain crosses the membrane as a helical span at residues 57-77 (LIWVAVIGDWLNLVLKWVLFG). The Lumenal segment spans residues 78 to 113 (ERPYWWVHETKFYGAGPAPSLQQFPITCETGPGSPS). A substrate-binding site is contributed by arginine 79. The chain crosses the membrane as a helical span at residues 114-134 (GHAMGAAGVWYVMVTALLSIA). Histidine 115 serves as the catalytic Proton donor. The Cytoplasmic segment spans residues 135–141 (REKQCPP). A helical membrane pass occupies residues 142–162 (LLYRFLYIGLWMLMGLVELVV). Residues 163-166 (CISR) lie on the Lumenal side of the membrane. Arginine 166 contacts substrate. A helical membrane pass occupies residues 167 to 187 (VYMAAHFPHQVIAGIITGTLV). Histidine 172 (nucleophile) is an active-site residue. At 188–205 (AEVVSKEKWIYSASLKKY) the chain is on the cytoplasmic side. Residues 206–226 (FLITLFLTSFAVGFYVLLKAL) form a helical membrane-spanning segment. The Lumenal segment spans residues 227-256 (DVDLLWTMEKAQKWCIRPEWVHLDSAPFAS). A helical membrane pass occupies residues 257–276 (LLRNMGSLFGLGLGLHSPFY). The Cytoplasmic portion of the chain corresponds to 277–289 (KTTKMRIMSAPLR). The helical transmembrane segment at 290–310 (IGCIVISVSLLHLLDGWTFSP) threads the bilayer. Residues 311-324 (ENHMTFYALSFGKS) are Lumenal-facing. A helical transmembrane segment spans residues 325–345 (AVALLIPTTLVPWALSKIYPV). The Cytoplasmic segment spans residues 346 to 352 (KTEGKNL). Residues 349–352 (GKNL) carry the Prevents secretion from ER motif.

The protein belongs to the glucose-6-phosphatase family.

It localises to the endoplasmic reticulum membrane. The catalysed reaction is D-glucose 6-phosphate + H2O = D-glucose + phosphate. The protein operates within carbohydrate biosynthesis; gluconeogenesis. In terms of biological role, hydrolyzes glucose-6-phosphate to glucose in the endoplasmic reticulum. Forms with the glucose-6-phosphate transporter (SLC37A4/G6PT) the complex responsible for glucose production in the terminal step of glycogenolysis and gluconeogenesis. Hence, it is the key enzyme in homeostatic regulation of blood glucose levels. The chain is Glucose-6-phosphatase catalytic subunit 1 (g6pc1) from Haplochromis nubilus (Blue Victoria mouthbrooder).